The sequence spans 319 residues: Lipoyl synthase (319 aa).

Positions 1–29 are disordered; it reads MVVVVDTVSDKPIRPRHPEKAARPDALSP. The span at 8 to 29 shows a compositional bias: basic and acidic residues; it reads VSDKPIRPRHPEKAARPDALSP. Residues cysteine 61, cysteine 66, cysteine 72, cysteine 87, cysteine 91, cysteine 94, and serine 300 each coordinate [4Fe-4S] cluster. Positions 73 to 289 constitute a Radical SAM core domain; sequence WDRKHATFMI…ESLAYAKGFL (217 aa).

It belongs to the radical SAM superfamily. Lipoyl synthase family. Requires [4Fe-4S] cluster as cofactor.

Its subcellular location is the cytoplasm. It catalyses the reaction [[Fe-S] cluster scaffold protein carrying a second [4Fe-4S](2+) cluster] + N(6)-octanoyl-L-lysyl-[protein] + 2 oxidized [2Fe-2S]-[ferredoxin] + 2 S-adenosyl-L-methionine + 4 H(+) = [[Fe-S] cluster scaffold protein] + N(6)-[(R)-dihydrolipoyl]-L-lysyl-[protein] + 4 Fe(3+) + 2 hydrogen sulfide + 2 5'-deoxyadenosine + 2 L-methionine + 2 reduced [2Fe-2S]-[ferredoxin]. Its pathway is protein modification; protein lipoylation via endogenous pathway; protein N(6)-(lipoyl)lysine from octanoyl-[acyl-carrier-protein]: step 2/2. In terms of biological role, catalyzes the radical-mediated insertion of two sulfur atoms into the C-6 and C-8 positions of the octanoyl moiety bound to the lipoyl domains of lipoate-dependent enzymes, thereby converting the octanoylated domains into lipoylated derivatives. This Rhodopseudomonas palustris (strain BisA53) protein is Lipoyl synthase.